A 540-amino-acid polypeptide reads, in one-letter code: Chaperonin GroEL (540 aa).

Residues 29 to 32 (TLGP), 86 to 90 (DGTTT), Gly413, 477 to 479 (DAL), and Asp493 contribute to the ATP site.

Belongs to the chaperonin (HSP60) family. In terms of assembly, forms a cylinder of 14 subunits composed of two heptameric rings stacked back-to-back. Interacts with the co-chaperonin GroES.

It localises to the cytoplasm. The enzyme catalyses ATP + H2O + a folded polypeptide = ADP + phosphate + an unfolded polypeptide.. Together with its co-chaperonin GroES, plays an essential role in assisting protein folding. The GroEL-GroES system forms a nano-cage that allows encapsulation of the non-native substrate proteins and provides a physical environment optimized to promote and accelerate protein folding. This is Chaperonin GroEL from Clostridium botulinum (strain Alaska E43 / Type E3).